The chain runs to 337 residues: Glutaredoxin-3 (337 aa).

At A2 the chain carries N-acetylalanine. Residues 2-119 form the Thioredoxin domain; that stretch reads AAGAAEAGEA…LTKKVQRHVS (118 aa). S119 carries the phosphoserine modification. Glutaredoxin domains lie at 144–238 and 239–337; these read HAAP…PKLE and ERLK…KGEN. Positions 161 and 263 each coordinate [2Fe-2S] cluster.

As to quaternary structure, homodimer; the homodimer is independent of 2Fe-2S clusters. Heterotrimer; forms a heterotrimeric complex composed by two BOLA2 molecules and one GLRX3 molecule; linked by [2Fe-2S] clusters. Interacts (via N-terminus) with PRKCQ/PKC-theta. Interacts (via C-terminus) with CSRP3. Interacts with CSRP2.

Its subcellular location is the cytoplasm. It localises to the cytosol. The protein resides in the cell cortex. The protein localises to the myofibril. It is found in the sarcomere. Its subcellular location is the z line. Together with BOLA2, acts as a cytosolic iron-sulfur (Fe-S) cluster assembly factor that facilitates [2Fe-2S] cluster insertion into a subset of cytosolic proteins. Acts as a critical negative regulator of cardiac hypertrophy and a positive inotropic regulator. Required for hemoglobin maturation. Does not possess any thyoredoxin activity since it lacks the conserved motif that is essential for catalytic activity. The polypeptide is Glutaredoxin-3 (Glrx3) (Mus musculus (Mouse)).